A 303-amino-acid polypeptide reads, in one-letter code: Putative fimbrium subunit Fim1C (303 aa).

The N-terminal stretch at 1–22 is a signal peptide; that stretch reads MKKQALICALLATVLLPGCSED.

It belongs to the bacteroidetes fimbrillin superfamily. Mfa-like family. As to quaternary structure, may be part of the fimbrial tip.

The protein resides in the fimbrium. In terms of biological role, putative component of the fimbrium tip. Fimbriae are filamentous appendages on the cell surface that mediate cell adhesion and biofilm formation. The chain is Putative fimbrium subunit Fim1C (fim1C) from Bacteroides uniformis (strain ATCC 8492 / DSM 6597 / CCUG 4942 / CIP 103695 / JCM 5828 / KCTC 5204 / NCTC 13054 / VPI 0061).